We begin with the raw amino-acid sequence, 122 residues long: Ribosome-binding factor A (122 aa).

The protein belongs to the RbfA family. Monomer. Binds 30S ribosomal subunits, but not 50S ribosomal subunits or 70S ribosomes.

The protein resides in the cytoplasm. Its function is as follows. One of several proteins that assist in the late maturation steps of the functional core of the 30S ribosomal subunit. Associates with free 30S ribosomal subunits (but not with 30S subunits that are part of 70S ribosomes or polysomes). Required for efficient processing of 16S rRNA. May interact with the 5'-terminal helix region of 16S rRNA. This is Ribosome-binding factor A from Polaromonas sp. (strain JS666 / ATCC BAA-500).